Here is a 566-residue protein sequence, read N- to C-terminus: Chaperone ric-8 (566 aa).

It belongs to the synembryn family. In terms of assembly, interacts with GDP-bound G-alpha proteins goa-1 and gpa-16. Does not interact with G-alpha proteins when they are in complex with subunits beta and gamma. Present throughout the nervous system in juveniles and adults (at protein level).

It localises to the cytoplasm. The protein resides in the cell cortex. In terms of biological role, chaperone that specifically binds and folds some, but not all, nascent G alpha proteins prior to G protein heterotrimer formation, promoting their stability and activity. Also acts as a guanine nucleotide exchange factor (GEF) for G alpha proteins by stimulating exchange of bound GDP for free GTP. Able to facilitate synaptic transmission in the nervous system probably by activating G(q)-alpha (egl-30). Also able to activate the G(s)-alpha in synaptic signaling network. Plays a key role in asymmetric spindle positioning, a step for asymmetric cell division that generates cell diversity during development by activating G(i)-alpha protein goa-1 and gpa-16 independently of G-protein coupled receptors. While it acts as a GEF for goa-1, it has no GEF activity toward gpa-16. In addition to its GEF activity, it is required for cortical subcellular localization of G-alpha proteins such as gpa-16. Also required for the interaction of goa-1 and gpr-1/2, suggesting that it may act by generating G-alpha proteins free from G-beta-gamma subunits, enabling gpr-1/2 to mediate asymmetric cell division. The polypeptide is Chaperone ric-8 (ric-8) (Caenorhabditis elegans).